Reading from the N-terminus, the 210-residue chain is UPF0173 protein PF0020 (210 aa).

Belongs to the UPF0173 family.

The protein is UPF0173 protein PF0020 of Pyrococcus furiosus (strain ATCC 43587 / DSM 3638 / JCM 8422 / Vc1).